The sequence spans 498 residues: NAD(P)H-quinone oxidoreductase chain 4, chloroplastic (498 aa).

14 consecutive transmembrane segments (helical) span residues 4–24, 31–51, 76–96, 113–130, 134–154, 167–187, 208–228, 242–262, 272–292, 305–325, 330–350, 386–406, 411–431, and 463–483; these read FPWL…IFLF, VIKW…SYVF, FYWS…TGFI, LFYF…GTFS, ILLF…LLSM, FILY…GMSF, ALEI…SPII, HYST…YGLV, AHSI…IYAA, IAYS…SISD, GAIL…FLAG, LALP…GIIT, LLIT…LTPI, and FISI…DFIF.

The protein belongs to the complex I subunit 4 family.

Its subcellular location is the plastid. It is found in the chloroplast thylakoid membrane. It catalyses the reaction a plastoquinone + NADH + (n+1) H(+)(in) = a plastoquinol + NAD(+) + n H(+)(out). The enzyme catalyses a plastoquinone + NADPH + (n+1) H(+)(in) = a plastoquinol + NADP(+) + n H(+)(out). This chain is NAD(P)H-quinone oxidoreductase chain 4, chloroplastic, found in Glycine max (Soybean).